The chain runs to 640 residues: MTVDAAATPAEAPATNGHGDAHSTASFTALTLGSIGVVYGDIGTSPLYALREAVTAASSSGEAAPHAVMGVISLILWALIVVVTLKYVVILLRADNHGEGGTLALMALAQRGVTRGASIIVLLGIISGALFYGDAVITPALSVLSAIEGTKLVTAAFDPYVVPLTVIILAALFAVQARGTAKVAAFFGPIMLIWFLVIGIAAFPPILRHPEVLWAINPVNAVSFMLHHGIVGFITLGAVFLAVTGAEALYADLGHFGKRPIQTAWLFVVLPSLALNYLGQGALIIADAKALENPFFLMFPEWALIPMVALATVATVIASQAVITGAYSLTRQAIQLGLLPRFEIRHTSEAHSGQIYIPRINKLLLASVVLLVLLFKSSSALASAYGISVTGTMVVTAMMGFVVIWKVWRWSPLAAGALIAPFLFLDLTFLSANLLKVLEGGWVPLALGGFVMTLMYTWRRGSRLLFEKSRKLEFPLADLVAMLEKRPPQRVPGTAVFLTSDPLSAPTALMHSLKHYKVLHEKNVILTIETAPTPRIDPSERVRLEQISPTFSKVTLRFGFMESPNVPRALAIARKLGWQFDIMSTSFFLSRRALKPAAHSGMPRWQDHLFITMSRSANDATDYFQIPSGRVVEVGTQVTI.

The span at 1–15 shows a compositional bias: low complexity; the sequence is MTVDAAATPAEAPAT. Positions 1–20 are disordered; the sequence is MTVDAAATPAEAPATNGHGD. A run of 12 helical transmembrane segments spans residues 30 to 50, 71 to 91, 117 to 137, 155 to 175, 183 to 203, 224 to 244, 265 to 285, 294 to 314, 363 to 383, 385 to 405, 410 to 430, and 437 to 457; these read LTLG…LYAL, VISL…VVIL, ASII…DAVI, AAFD…LFAV, VAAF…IAAF, FMLH…LAVT, WLFV…ALII, PFFL…ATVA, LLLA…ALAS, YGIS…VVIW, WSPL…LTFL, and VLEG…LMYT.

The protein belongs to the HAK/KUP transporter (TC 2.A.72) family.

The protein localises to the cell inner membrane. It catalyses the reaction K(+)(in) + H(+)(in) = K(+)(out) + H(+)(out). Its function is as follows. Transport of potassium into the cell. Likely operates as a K(+):H(+) symporter. The chain is Probable potassium transport system protein Kup 3 from Bradyrhizobium sp. (strain BTAi1 / ATCC BAA-1182).